Here is a 189-residue protein sequence, read N- to C-terminus: Peptidyl-tRNA hydrolase (189 aa).

Phe-15 provides a ligand contact to tRNA. His-20 (proton acceptor) is an active-site residue. Residues Tyr-65, Asn-67, and Asn-113 each coordinate tRNA.

Belongs to the PTH family. Monomer.

The protein resides in the cytoplasm. The catalysed reaction is an N-acyl-L-alpha-aminoacyl-tRNA + H2O = an N-acyl-L-amino acid + a tRNA + H(+). Hydrolyzes ribosome-free peptidyl-tRNAs (with 1 or more amino acids incorporated), which drop off the ribosome during protein synthesis, or as a result of ribosome stalling. Its function is as follows. Catalyzes the release of premature peptidyl moieties from peptidyl-tRNA molecules trapped in stalled 50S ribosomal subunits, and thus maintains levels of free tRNAs and 50S ribosomes. This is Peptidyl-tRNA hydrolase from Phytoplasma australiense.